The sequence spans 428 residues: C4-dicarboxylate transport protein (428 aa).

9 helical membrane passes run 8–28 (SLYVQVLTAIAIGILLGHFYP), 44–64 (LIKMVIAPVIFCTVVTGIAGM), 76–96 (VALLYFEVVSTIALIIGLIIV), 142–162 (IGAFASGNILQVLLFAVLFGF), 184–204 (VIFGIINMIMRLAPIGAFGAM), 222–242 (LIICFYITCILFVVVVLGSIA), 289–309 (VVGLVIPTGYSFNLDGTSIYL), 326–346 (IFHQITLLVVLLLSSKGAAGV), and 352–372 (IVLAATISAVGHLPVAGLALI).

This sequence belongs to the dicarboxylate/amino acid:cation symporter (DAACS) (TC 2.A.23) family.

It localises to the cell inner membrane. In terms of biological role, responsible for the transport of dicarboxylates such as succinate, fumarate, and malate from the periplasm across the membrane. The chain is C4-dicarboxylate transport protein from Klebsiella pneumoniae (strain 342).